We begin with the raw amino-acid sequence, 488 residues long: Probable 26S proteasome non-ATPase regulatory subunit 3 (488 aa).

The interval 1–20 (MTQDVEMKEQAAPPSNSLSS) is disordered. The 182-residue stretch at 240–421 (SRYLFYLGKI…GWMVSKETGD (182 aa)) folds into the PCI domain. Residues 452–488 (FPPNSHKEKESAEKRRERQQQEQELAKHIAEEDDDDF) form a disordered region. Residues 456–481 (SHKEKESAEKRRERQQQEQELAKHIA) show a composition bias toward basic and acidic residues.

This sequence belongs to the proteasome subunit S3 family. As to quaternary structure, the 26S proteasome is composed of a core protease, known as the 20S proteasome, capped at one or both ends by the 19S regulatory complex (RC). The RC is composed of at least 18 different subunits in two subcomplexes, the base and the lid, which form the portions proximal and distal to the 20S proteolytic core, respectively.

It localises to the nucleus. Acts as a regulatory subunit of the 26 proteasome which is involved in the ATP-dependent degradation of ubiquitinated proteins. The sequence is that of Probable 26S proteasome non-ATPase regulatory subunit 3 (21D7) from Nicotiana tabacum (Common tobacco).